The chain runs to 370 residues: 3,5-dihydroxyphenylacetyl-CoA synthase (370 aa).

Residue Cys-158 is part of the active site.

Belongs to the thiolase-like superfamily. Chalcone/stilbene synthases family.

It carries out the reaction 4 malonyl-CoA + 4 H(+) = (3,5-dihydroxyphenyl)acetyl-CoA + 4 CO2 + 3 CoA + H2O. It participates in antibiotic biosynthesis; vancomycin biosynthesis. Functionally, involved in the biosynthesis of the nonproteinogenic amino acid monomer (S)-3,5-dihydroxyphenylglycine (Dpg) responsible of the production of vancomycin and teicoplanin antibiotics. Catalyzes the Claisen condensation of four molecules of malonyl-CoA to yield 3,5-dihydroxyphenylacetyl-CoA (DPA-CoA) and three free coenzyme A (CoA). DpgA requires the presence of the dehydratases DpgB and DpgD to facilitate the aromatization of the DPA-S-DgpA or DPA-S-CoA intermediate. The protein is 3,5-dihydroxyphenylacetyl-CoA synthase (dpgA) of Amycolatopsis orientalis (Nocardia orientalis).